The primary structure comprises 218 residues: NAD(P)H-quinone oxidoreductase subunit I (218 aa).

4Fe-4S ferredoxin-type domains follow at residues 55-84 (GRIH…VDWV) and 95-124 (RNYS…MTEE). Residues cysteine 64, cysteine 67, cysteine 70, cysteine 74, cysteine 104, cysteine 107, cysteine 110, and cysteine 114 each coordinate [4Fe-4S] cluster. Positions 179-218 (LRAGKLPSQIIKELQADKSEEEGKNNSSDMVPNKLNSTNK) are disordered. Over residues 192–202 (LQADKSEEEGK) the composition is skewed to basic and acidic residues. Polar residues predominate over residues 203–218 (NNSSDMVPNKLNSTNK).

Belongs to the complex I 23 kDa subunit family. As to quaternary structure, NDH-1 is composed of at least 11 different subunits. The cofactor is [4Fe-4S] cluster.

It is found in the cellular thylakoid membrane. It catalyses the reaction a plastoquinone + NADH + (n+1) H(+)(in) = a plastoquinol + NAD(+) + n H(+)(out). It carries out the reaction a plastoquinone + NADPH + (n+1) H(+)(in) = a plastoquinol + NADP(+) + n H(+)(out). NDH-1 shuttles electrons from an unknown electron donor, via FMN and iron-sulfur (Fe-S) centers, to quinones in the respiratory and/or the photosynthetic chain. The immediate electron acceptor for the enzyme in this species is believed to be plastoquinone. Couples the redox reaction to proton translocation, and thus conserves the redox energy in a proton gradient. In Prochlorococcus marinus (strain NATL2A), this protein is NAD(P)H-quinone oxidoreductase subunit I.